A 554-amino-acid polypeptide reads, in one-letter code: Chaperonin GroEL (554 aa).

Residues 30-33, lysine 51, 87-91, glycine 416, and aspartate 503 each bind ATP; these read TLGP and DGTTT.

The protein belongs to the chaperonin (HSP60) family. As to quaternary structure, forms a cylinder of 14 subunits composed of two heptameric rings stacked back-to-back. Interacts with the co-chaperonin GroES.

The protein localises to the cytoplasm. The catalysed reaction is ATP + H2O + a folded polypeptide = ADP + phosphate + an unfolded polypeptide.. Functionally, together with its co-chaperonin GroES, plays an essential role in assisting protein folding. The GroEL-GroES system forms a nano-cage that allows encapsulation of the non-native substrate proteins and provides a physical environment optimized to promote and accelerate protein folding. This chain is Chaperonin GroEL, found in Holospora obtusa.